Reading from the N-terminus, the 641-residue chain is Soluble starch synthase 1, chloroplastic/amyloplastic (641 aa).

The transit peptide at 1-113 (MATAAGMGIG…DSIDKTIFVA (113 aa)) directs the protein to the chloroplast. Positions 62-96 (TFLVPTSTPPAPTQSPAPAPTPPPLPDSGVGEIEP) are disordered. Pro residues predominate over residues 68 to 87 (STPPAPTQSPAPAPTPPPLP). K147 is a binding site for ADP-alpha-D-glucose.

This sequence belongs to the glycosyltransferase 1 family. Bacterial/plant glycogen synthase subfamily. In terms of tissue distribution, leaves and immature seeds.

It is found in the plastid. The protein localises to the chloroplast. It localises to the amyloplast. It carries out the reaction [(1-&gt;4)-alpha-D-glucosyl](n) + ADP-alpha-D-glucose = [(1-&gt;4)-alpha-D-glucosyl](n+1) + ADP + H(+). It functions in the pathway glycan biosynthesis; starch biosynthesis. Involved in starch synthesis in endosperm amyloplasts. Plays a role in the elongation of amylopectin chains. Synthesizes preferentially amylopectin chains with a degree of polymerization (DP) of 7 to 11 by elongating chains with a DP of 4 to 7. Generates distincly chains with a DP of 8 to 12 chains from short chains with a DP of 6 to 7. This Oryza sativa subsp. japonica (Rice) protein is Soluble starch synthase 1, chloroplastic/amyloplastic.